The chain runs to 404 residues: Glucose-1-phosphate adenylyltransferase (404 aa).

Alpha-D-glucose 1-phosphate contacts are provided by residues Tyr-99, Gly-164, 179–180, and Ser-197; that span reads EK.

The protein belongs to the bacterial/plant glucose-1-phosphate adenylyltransferase family.

The catalysed reaction is alpha-D-glucose 1-phosphate + ATP + H(+) = ADP-alpha-D-glucose + diphosphate. Its pathway is capsule biogenesis; capsule polysaccharide biosynthesis. It participates in glycan biosynthesis; glycogen biosynthesis. Functionally, involved in the biosynthesis of ADP-glucose, a building block, required in the biosynthesis of maltose-1-phosphate (M1P) and in the elongation reactions to produce linear alpha-1,4-glucans. Catalyzes the reaction between ATP and alpha-D-glucose 1-phosphate (G1P) to produce pyrophosphate and ADP-Glc. This is Glucose-1-phosphate adenylyltransferase from Mycobacteroides abscessus (strain ATCC 19977 / DSM 44196 / CCUG 20993 / CIP 104536 / JCM 13569 / NCTC 13031 / TMC 1543 / L948) (Mycobacterium abscessus).